Reading from the N-terminus, the 394-residue chain is Phosphoglycerate kinase (394 aa).

Substrate is bound by residues 21–23 (DFN), R36, 59–62 (HLGR), R118, and R151. S183 is subject to Phosphoserine. ATP-binding residues include K201 and G292. Phosphothreonine is present on T299. ATP-binding positions include E323 and 350–353 (GGDS).

This sequence belongs to the phosphoglycerate kinase family. Monomer.

It is found in the cytoplasm. The catalysed reaction is (2R)-3-phosphoglycerate + ATP = (2R)-3-phospho-glyceroyl phosphate + ADP. The protein operates within carbohydrate degradation; glycolysis; pyruvate from D-glyceraldehyde 3-phosphate: step 2/5. This Bacillus cereus (strain ZK / E33L) protein is Phosphoglycerate kinase.